The following is a 454-amino-acid chain: tRNA modification GTPase MnmE (454 aa).

The (6S)-5-formyl-5,6,7,8-tetrahydrofolate site is built by Arg23, Glu80, and Lys120. Residues 216–377 enclose the TrmE-type G domain; it reads GMKVVIAGRP…LRNHLKQSMG (162 aa). Asn226 provides a ligand contact to K(+). GTP-binding positions include 226–231, 245–251, 270–273, 335–338, and 358–360; these read NAGKSS, TDIAGTT, DTAG, NKAD, and SAR. Ser230 contacts Mg(2+). Thr245, Ile247, and Thr250 together coordinate K(+). Position 251 (Thr251) interacts with Mg(2+). A (6S)-5-formyl-5,6,7,8-tetrahydrofolate-binding site is contributed by Lys454.

Belongs to the TRAFAC class TrmE-Era-EngA-EngB-Septin-like GTPase superfamily. TrmE GTPase family. In terms of assembly, homodimer. Heterotetramer of two MnmE and two MnmG subunits. It depends on K(+) as a cofactor.

It is found in the cytoplasm. Exhibits a very high intrinsic GTPase hydrolysis rate. Involved in the addition of a carboxymethylaminomethyl (cmnm) group at the wobble position (U34) of certain tRNAs, forming tRNA-cmnm(5)s(2)U34. This Klebsiella pneumoniae subsp. pneumoniae (strain ATCC 700721 / MGH 78578) protein is tRNA modification GTPase MnmE.